Consider the following 405-residue polypeptide: uncharacterized protein (405 aa).

3 disordered regions span residues 1 to 21 (MSKKVNKNASPKNNSDSESKT), 150 to 179 (IKDESDSDSDDEDTKKKKKNTKNKGKQEGP), and 285 to 405 (DDED…KSRS). The segment covering 7-16 (KNASPKNNSD) has biased composition (polar residues). Composition is skewed to acidic residues over residues 312 to 331 (SDDEDSDNEKEKEKEEDDEE) and 349 to 358 (DDEDDEEEGE). 2 stretches are compositionally biased toward basic residues: residues 365–374 (SSKKSSKKAS) and 390–405 (PKKKSSKAKSPSKSRS).

This is an uncharacterized protein from Acanthamoeba polyphaga (Amoeba).